Consider the following 265-residue polypeptide: Apolipoprotein A-I (265 aa).

Residues 1–18 (MKAVVLAVAALFLAGGEA) form the signal peptide. 2 repeat units span residues 68 to 89 (LKLT…EQLG) and 90 to 111 (PVTQ…QEMN). Residues 68–265 (LKLTENLDTL…EEASKKLSSQ (198 aa)) form a 10 X approximate tandem repeats region. Position 110 is a methionine sulfoxide (methionine 110). A 3; half-length repeat occupies 112–122 (KDLADMKQKVQ). A run of 3 repeats spans residues 123–144 (PYME…QKVE), 145–166 (PLST…EKLA), and 167–188 (PLGA…TQLA). The 7; truncated repeat unit spans residues 189 to 208 (PYSEQMRERLAERLAALRDS). Methionine 194 is subject to Methionine sulfoxide. Repeat unit 8 spans residues 209–230 (PSLAEYQAKAHEHLKTLHEKAQ). The stretch at 231–241 (PALSDLGQGVL) is one 9; half-length repeat. Repeat unit 10 spans residues 242-265 (PVLESLKATLVGAIEEASKKLSSQ).

This sequence belongs to the apolipoprotein A1/A4/E family. In terms of assembly, homodimer. Interacts with APOA1BP and CLU. Component of a sperm activating protein complex (SPAP), consisting of APOA1, an immunoglobulin heavy chain, an immunoglobulin light chain and albumin. Interacts with NDRG1. Interacts with SCGB3A2. Interacts with NAXE and YJEFN3. Glycosylated. Post-translationally, palmitoylated. In terms of processing, phosphorylation sites are present in the extracellular medium.

It is found in the secreted. Functionally, participates in the reverse transport of cholesterol from tissues to the liver for excretion by promoting cholesterol efflux from tissues and by acting as a cofactor for the lecithin cholesterol acyltransferase (LCAT). As part of the SPAP complex, activates spermatozoa motility. In Dipodomys ordii (Ord's kangaroo rat), this protein is Apolipoprotein A-I (Apoa1).